The primary structure comprises 502 residues: ATP synthase subunit alpha (502 aa).

Residues 115-135 form a disordered region; sequence VDGLGPINTTNTRPIESPAPG. 169–176 contacts ATP; sequence GDRQTGKT.

Belongs to the ATPase alpha/beta chains family. F-type ATPases have 2 components, CF(1) - the catalytic core - and CF(0) - the membrane proton channel. CF(1) has five subunits: alpha(3), beta(3), gamma(1), delta(1), epsilon(1). CF(0) has three main subunits: a(1), b(2) and c(9-12). The alpha and beta chains form an alternating ring which encloses part of the gamma chain. CF(1) is attached to CF(0) by a central stalk formed by the gamma and epsilon chains, while a peripheral stalk is formed by the delta and b chains.

Its subcellular location is the cell membrane. It catalyses the reaction ATP + H2O + 4 H(+)(in) = ADP + phosphate + 5 H(+)(out). Produces ATP from ADP in the presence of a proton gradient across the membrane. The alpha chain is a regulatory subunit. The protein is ATP synthase subunit alpha of Bacillus cereus (strain B4264).